We begin with the raw amino-acid sequence, 348 residues long: UPF0324 membrane protein BPP3732 (348 aa).

Transmembrane regions (helical) follow at residues 20 to 39 (GILF…DLPF), 43 to 62 (FGFS…GNFL), 98 to 120 (IAAV…LLIG), 135 to 157 (AMLT…EPTL), 164 to 186 (SAVA…PVIY), 196 to 215 (QALG…VVGA), 235 to 257 (VALL…AAGA), 267 to 286 (VPWF…LDIL), 299 to 318 (VFVL…FAQI), and 322 to 344 (GPRV…YGIV).

It belongs to the UPF0324 family.

It is found in the cell membrane. The chain is UPF0324 membrane protein BPP3732 from Bordetella parapertussis (strain 12822 / ATCC BAA-587 / NCTC 13253).